Reading from the N-terminus, the 183-residue chain is MSQARFIAFSDGSALVNPGGPGGTGYVVLDRARPAYRFGGTRWVEDGPNAVTNNRMELRAVLEALEGLPGGEAVQVISDSRYVVDALSRWIHGWRRKGWRTASGEPVLNRDLIEALDARARDLSVTYTWVRGHDGHAVNEVVDQLAQAAARGVAGPGEAEVVAALRAEAFLAGGPPAPRSSRA.

An RNase H type-1 domain is found at 2–151 (SQARFIAFSD…VDQLAQAAAR (150 aa)). Mg(2+)-binding residues include Asp11, Glu57, Asp79, and Asp143.

The protein belongs to the RNase H family. In terms of assembly, monomer. The cofactor is Mg(2+).

The protein resides in the cytoplasm. The enzyme catalyses Endonucleolytic cleavage to 5'-phosphomonoester.. Its function is as follows. Endonuclease that specifically degrades the RNA of RNA-DNA hybrids. This is Ribonuclease H from Anaeromyxobacter dehalogenans (strain 2CP-C).